Consider the following 747-residue polypeptide: Photosystem I P700 chlorophyll a apoprotein A2 (747 aa).

The next 8 helical transmembrane spans lie at 46-69, 135-158, 175-199, 273-291, 341-364, 380-406, 428-450, and 530-548; these read LFATHFGHLAIIGLWVAGNLFHIA, LFQGAIFLNILVCWLLFAGWLHLQ, LNHHLAVLFGFSSIAWTGHLVHVAI, IAHHHLAIGVMFIIAGHMY, LHFQLGLALASLGAACSLVAQHMG, SALYTHHQYIAMFLMVGAFSHGAIFFV, ALISHLSWVTMLLGFHTLGIYVH, and FLVHHAIALGLHTTALILI. [4Fe-4S] cluster contacts are provided by C572 and C581. 2 helical membrane-spanning segments follow: residues 588–609 and 656–678; these read ATYLAMFWALNTIAWITFYWHW and LSPWAWMFLFGHLIWATGFMFLI. Divinyl chlorophyll a contacts are provided by H667, M675, and Y683. Residue W684 coordinates phylloquinone. Residues 720–740 traverse the membrane as a helical segment; that stretch reads LVGLTHFTVGNFVTFGAFVIA.

Belongs to the PsaA/PsaB family. In terms of assembly, the PsaA/B heterodimer binds the P700 divinyl chlorophyll special pair and subsequent electron acceptors. PSI consists of a core antenna complex that captures photons, and an electron transfer chain that converts photonic excitation into a charge separation. The cyanobacterial PSI reaction center is composed of one copy each of PsaA,B,C,D,E,F,I,J,K,L,M and X, and forms trimeric complexes. PSI electron transfer chain: 5 divinyl chlorophyll a, 1 divinyl chlorophyll a', 2 phylloquinones and 3 4Fe-4S clusters. PSI core antenna: 90 divinyl chlorophyll a, 22 carotenoids, 3 phospholipids and 1 galactolipid. P700 is a divinyl chlorophyll a/divinyl chlorophyll a' dimer, A0 is one or more divinyl chlorophyll a, A1 is one or both phylloquinones and FX is a shared 4Fe-4S iron-sulfur center. serves as cofactor.

The protein resides in the cellular thylakoid membrane. It carries out the reaction reduced [plastocyanin] + hnu + oxidized [2Fe-2S]-[ferredoxin] = oxidized [plastocyanin] + reduced [2Fe-2S]-[ferredoxin]. PsaA and PsaB bind P700, the primary electron donor of photosystem I (PSI), as well as the electron acceptors A0, A1 and FX. PSI is a plastocyanin/cytochrome c6-ferredoxin oxidoreductase, converting photonic excitation into a charge separation, which transfers an electron from the donor P700 chlorophyll pair to the spectroscopically characterized acceptors A0, A1, FX, FA and FB in turn. Oxidized P700 is reduced on the lumenal side of the thylakoid membrane by plastocyanin or cytochrome c6. The chain is Photosystem I P700 chlorophyll a apoprotein A2 from Prochlorococcus marinus (strain SARG / CCMP1375 / SS120).